The following is a 205-amino-acid chain: MSQTALQKVVEHARAGLEVRESFFEQYSQLVVDVSKALAVRLALGSKILFCGNGGSAADCQHLAAELVNRFKLERPPLPGIALTTDSSILTAIGNDYSYEMVFEKQVQALGQPGDVLVGISTSGTSPNVISALKEAKRKGMVTIGMTGISAGEMLPICDHIISVPSKDTAVIQEVHIAVGHLFCHLIDHFLFEAVGELEPYLSGE.

An SIS domain is found at 38 to 200 (LAVRLALGSK…LFEAVGELEP (163 aa)). A substrate-binding site is contributed by 53–55 (NGG). 2 residues coordinate Zn(2+): His-62 and Glu-66. Substrate is bound by residues Glu-66, 95-96 (ND), 121-123 (STS), Ser-126, and Gln-173. Zn(2+)-binding residues include Gln-173 and His-181.

It belongs to the SIS family. GmhA subfamily. In terms of assembly, homotetramer. Zn(2+) is required as a cofactor.

The protein localises to the cytoplasm. It carries out the reaction 2 D-sedoheptulose 7-phosphate = D-glycero-alpha-D-manno-heptose 7-phosphate + D-glycero-beta-D-manno-heptose 7-phosphate. The protein operates within carbohydrate biosynthesis; D-glycero-D-manno-heptose 7-phosphate biosynthesis; D-glycero-alpha-D-manno-heptose 7-phosphate and D-glycero-beta-D-manno-heptose 7-phosphate from sedoheptulose 7-phosphate: step 1/1. Functionally, catalyzes the isomerization of sedoheptulose 7-phosphate in D-glycero-D-manno-heptose 7-phosphate. The sequence is that of Phosphoheptose isomerase from Maridesulfovibrio salexigens (strain ATCC 14822 / DSM 2638 / NCIMB 8403 / VKM B-1763) (Desulfovibrio salexigens).